A 257-amino-acid polypeptide reads, in one-letter code: Asnovolin H dehydrogenase nvfC (257 aa).

Residues 7-26 form a helical membrane-spanning segment; that stretch reads YVLIITGSASGIGLATATIA. Ile-11 lines the NADP(+) pocket. N-linked (GlcNAc...) asparagine glycans are attached at residues Asn-57, Asn-92, and Asn-110. 4 residues coordinate NADP(+): Arg-119, Tyr-151, Lys-155, and Val-184. Catalysis depends on Tyr-151, which acts as the Proton donor. The active-site Lowers pKa of active site Tyr is the Lys-155.

It belongs to the short-chain dehydrogenases/reductases (SDR) family.

The protein localises to the membrane. The enzyme catalyses asnovolin H + A = chermesin D + AH2. The protein operates within secondary metabolite biosynthesis; terpenoid biosynthesis. Its function is as follows. Short chain dehydrogenase; part of the gene cluster that mediates the biosynthesis of novofumigatonin, a heavily oxygenated meroterpenoid containing a unique orthoester moiety. The first step of the pathway is the synthesis of 3,5-dimethylorsellinic acid (DMOA) by the polyketide synthase nvfA via condensation of one acetyl-CoA starter unit with 3 malonyl-CoA units and 2 methylations. DMOA is then converted to farnesyl-DMOA by the farnesyltransferase nvfB. Epoxydation by FAD-dependent monooxygenase nvfK, followed by a protonation-initiated cyclization catalyzed by the terpene cyclase nvfL leads to the production of asnavolin H. The short chain dehydrogenase nvfC then as a 3-OH dehydrogenase of asnovolin H to yield chemesin D. There are two branches to synthesize asnovolin A from chemesin D. In one branch, chemesin D undergoes Baeyer-Villiger oxidation by nvfH, methylation by nvfJ, and enoyl reduction by the nvfM D enoylreductase that reduces the double bond between C-5'and C-6', to form respectively asnovolin I, asnovolin K, and asnovolin A. In the other branch, the methylation precedes the Baeyer-Villiger oxidation and the enoyl reduction to yield asnovolin A via the asnovolin J intermediate. Asnovolin A is further converted to fumigatonoid A by the Fe(II)/2-oxoglutarate-dependent dioxygenase nvfI that catalyzes an endoperoxidation reaction. The alpha/beta hydrolase nvfD then acts as an epimerase that converts fumigatonoid A to its C-5' epimer, which then undergoes spontaneous or nvfD-catalyzed lactonization. The following step utilizes the ketoreductase nvfG to produce fumigatonoid B. The dioxygenase nvfE further converts fumigatonoid B into fumigatonoid C. Finally the Fe(II)/2-oxoglutarate-dependent dioxygenase nvfF catalyzes two rounds of oxidation to transform fumigatonoid C into the end product, novofumigatonin A. This is Asnovolin H dehydrogenase nvfC from Aspergillus novofumigatus (strain IBT 16806).